The chain runs to 481 residues: UDP-N-acetylmuramoylalanine--D-glutamate ligase (481 aa).

Residue 108–114 (GTNGKTS) participates in ATP binding.

Belongs to the MurCDEF family.

It is found in the cytoplasm. The enzyme catalyses UDP-N-acetyl-alpha-D-muramoyl-L-alanine + D-glutamate + ATP = UDP-N-acetyl-alpha-D-muramoyl-L-alanyl-D-glutamate + ADP + phosphate + H(+). It participates in cell wall biogenesis; peptidoglycan biosynthesis. Its function is as follows. Cell wall formation. Catalyzes the addition of glutamate to the nucleotide precursor UDP-N-acetylmuramoyl-L-alanine (UMA). The protein is UDP-N-acetylmuramoylalanine--D-glutamate ligase of Bifidobacterium longum subsp. infantis (strain ATCC 15697 / DSM 20088 / JCM 1222 / NCTC 11817 / S12).